Consider the following 170-residue polypeptide: Phosphopantetheine adenylyltransferase (170 aa).

A substrate-binding site is contributed by threonine 14. ATP is bound by residues 14–15 (TF) and histidine 22. 3 residues coordinate substrate: lysine 46, leucine 78, and arginine 92. ATP is bound by residues 93-95 (GLR), glutamate 103, and 128-134 (WLYISST).

The protein belongs to the bacterial CoaD family. In terms of assembly, homohexamer. It depends on Mg(2+) as a cofactor.

It is found in the cytoplasm. The enzyme catalyses (R)-4'-phosphopantetheine + ATP + H(+) = 3'-dephospho-CoA + diphosphate. The protein operates within cofactor biosynthesis; coenzyme A biosynthesis; CoA from (R)-pantothenate: step 4/5. Functionally, reversibly transfers an adenylyl group from ATP to 4'-phosphopantetheine, yielding dephospho-CoA (dPCoA) and pyrophosphate. The protein is Phosphopantetheine adenylyltransferase of Oleidesulfovibrio alaskensis (strain ATCC BAA-1058 / DSM 17464 / G20) (Desulfovibrio alaskensis).